Reading from the N-terminus, the 194-residue chain is Crossover junction endodeoxyribonuclease RuvC (194 aa).

Residues aspartate 7, glutamate 68, and aspartate 141 contribute to the active site. Mg(2+) is bound by residues aspartate 7, glutamate 68, and aspartate 141.

This sequence belongs to the RuvC family. As to quaternary structure, homodimer which binds Holliday junction (HJ) DNA. The HJ becomes 2-fold symmetrical on binding to RuvC with unstacked arms; it has a different conformation from HJ DNA in complex with RuvA. In the full resolvosome a probable DNA-RuvA(4)-RuvB(12)-RuvC(2) complex forms which resolves the HJ. Mg(2+) is required as a cofactor.

It localises to the cytoplasm. It catalyses the reaction Endonucleolytic cleavage at a junction such as a reciprocal single-stranded crossover between two homologous DNA duplexes (Holliday junction).. Functionally, the RuvA-RuvB-RuvC complex processes Holliday junction (HJ) DNA during genetic recombination and DNA repair. Endonuclease that resolves HJ intermediates. Cleaves cruciform DNA by making single-stranded nicks across the HJ at symmetrical positions within the homologous arms, yielding a 5'-phosphate and a 3'-hydroxyl group; requires a central core of homology in the junction. The consensus cleavage sequence is 5'-(A/T)TT(C/G)-3'. Cleavage occurs on the 3'-side of the TT dinucleotide at the point of strand exchange. HJ branch migration catalyzed by RuvA-RuvB allows RuvC to scan DNA until it finds its consensus sequence, where it cleaves and resolves the cruciform DNA. The polypeptide is Crossover junction endodeoxyribonuclease RuvC (Bifidobacterium longum (strain DJO10A)).